A 277-amino-acid polypeptide reads, in one-letter code: 4-deoxy-L-threo-5-hexosulose-uronate ketol-isomerase (277 aa).

Zn(2+)-binding residues include His195, His197, Glu202, and His244.

The protein belongs to the KduI family. Requires Zn(2+) as cofactor.

The catalysed reaction is 5-dehydro-4-deoxy-D-glucuronate = 3-deoxy-D-glycero-2,5-hexodiulosonate. It functions in the pathway glycan metabolism; pectin degradation; 2-dehydro-3-deoxy-D-gluconate from pectin: step 4/5. Functionally, catalyzes the isomerization of 5-dehydro-4-deoxy-D-glucuronate to 3-deoxy-D-glycero-2,5-hexodiulosonate. This chain is 4-deoxy-L-threo-5-hexosulose-uronate ketol-isomerase, found in Oceanobacillus iheyensis (strain DSM 14371 / CIP 107618 / JCM 11309 / KCTC 3954 / HTE831).